Here is a 186-residue protein sequence, read N- to C-terminus: Pyridoxal 5'-phosphate synthase subunit PdxT (186 aa).

46 to 48 (GES) contributes to the L-glutamine binding site. Cys75 acts as the Nucleophile in catalysis. L-glutamine-binding positions include Arg101 and 129-130 (IR). Catalysis depends on charge relay system residues His165 and Glu167.

The protein belongs to the glutaminase PdxT/SNO family. In the presence of PdxS, forms a dodecamer of heterodimers. Only shows activity in the heterodimer.

The enzyme catalyses aldehydo-D-ribose 5-phosphate + D-glyceraldehyde 3-phosphate + L-glutamine = pyridoxal 5'-phosphate + L-glutamate + phosphate + 3 H2O + H(+). The catalysed reaction is L-glutamine + H2O = L-glutamate + NH4(+). It functions in the pathway cofactor biosynthesis; pyridoxal 5'-phosphate biosynthesis. Catalyzes the hydrolysis of glutamine to glutamate and ammonia as part of the biosynthesis of pyridoxal 5'-phosphate. The resulting ammonia molecule is channeled to the active site of PdxS. This chain is Pyridoxal 5'-phosphate synthase subunit PdxT, found in Staphylococcus aureus (strain Mu3 / ATCC 700698).